The following is a 198-amino-acid chain: ATP-dependent Clp protease proteolytic subunit (198 aa).

Residue Ser98 is the Nucleophile of the active site. His123 is a catalytic residue.

The protein belongs to the peptidase S14 family. Fourteen ClpP subunits assemble into 2 heptameric rings which stack back to back to give a disk-like structure with a central cavity, resembling the structure of eukaryotic proteasomes.

It localises to the cytoplasm. It carries out the reaction Hydrolysis of proteins to small peptides in the presence of ATP and magnesium. alpha-casein is the usual test substrate. In the absence of ATP, only oligopeptides shorter than five residues are hydrolyzed (such as succinyl-Leu-Tyr-|-NHMec, and Leu-Tyr-Leu-|-Tyr-Trp, in which cleavage of the -Tyr-|-Leu- and -Tyr-|-Trp bonds also occurs).. Its function is as follows. Cleaves peptides in various proteins in a process that requires ATP hydrolysis. Has a chymotrypsin-like activity. Plays a major role in the degradation of misfolded proteins. The chain is ATP-dependent Clp protease proteolytic subunit from Levilactobacillus brevis (strain ATCC 367 / BCRC 12310 / CIP 105137 / JCM 1170 / LMG 11437 / NCIMB 947 / NCTC 947) (Lactobacillus brevis).